Reading from the N-terminus, the 502-residue chain is MPIWKTQTFFTSISVIQIVNKETKVSTKKEKDSMLNQLNTILRFLFLFLQLIKSSAAVEPNGGPNILDHNIMLVNTNATIPKKEQTDFEVISPTKQTQVDEDCKKGLYHIENAGNLIELQAKCWKVVGNIEISSNYSGSLIDLGLIREIEGDLIIKNNKHIFRIQGYNLESLGKLELDSLTSFVSLDFPALKEVETVDWRVLPILSSVVINGNIKKIKNIIISDTALTSIDYFNNVKKVDIFNINNNRFLENLFASLESVTKQLTVHSNAKELELDLSNLHTVENMTIKDVSEIKLAKLSSVNSSLEFIENQFSSLELPLLAKVQGTLGLIDNKNLKKLNFSNATDIQGGLMIANNTELAKIDFFPKLRQIGGAIYFEGSFDKIDLPELKLVKGSAYIKSSSEELNCEEFTSPKAGRSIIRGGKIECTSGMKSKMLNVDEEGNVLGKQETDNDNGKKEKGKNGAKSQGSSKKMENSAPKNIFIDAFKMSVYAVFTVLFSIIF.

Residues Met1–Ala56 form the signal peptide. N-linked (GlcNAc...) asparagine glycosylation is found at Asn77, Asn135, Asn285, Asn303, Asn340, Asn343, and Asn355. The segment at Glu441–Glu474 is disordered. A compositionally biased stretch (basic and acidic residues) spans Gln448–Lys461. The GPI-anchor amidated asparagine moiety is linked to residue Asn475. Positions Ser476–Phe502 are cleaved as a propeptide — removed in mature form.

This sequence belongs to the SPS2 family.

Its subcellular location is the cell membrane. Involved in middle stages of meiosis. Redundant with SPS22 for the organization of the beta-glucan layer of the spore wall. This is Sporulation-specific protein 2 (SPS2) from Saccharomyces cerevisiae (strain ATCC 204508 / S288c) (Baker's yeast).